Here is a 591-residue protein sequence, read N- to C-terminus: Guanylate-binding protein 2 (591 aa).

Residues 1–309 form a GTPase domain (Globular) region; it reads MAPEINLPGP…NAISSGDLPC (309 aa). The 242-residue stretch at 35 to 276 folds into the GB1/RHD3-type G domain; sequence TQPVVVVAIV…FCSYILSHSN (242 aa). Residues 45–52, 181–182, and L245 each bind GTP; these read GLYRTGKS and RD. A Cysteine methyl ester modification is found at C588. C588 carries S-geranylgeranyl cysteine lipidation. A propeptide spans 589–591 (removed in mature form); it reads NIL.

It belongs to the TRAFAC class dynamin-like GTPase superfamily. GB1/RHD3 GTPase family. GB1 subfamily. Homodimer; homodimerization occurs upon GTP-binding and is required for the association with membranous structures. Heterodimer with other family members, including GBP1, GBP3, GBP4 and GBP5. Post-translationally, (Microbial infection) Ubiquitinated by S.flexneri IpaH9.8, leading to its degradation by the proteasome, thereby preventing its ability to promote host defense against bacterial infection. Isoprenylation is required for proper subcellular location.

It localises to the cytoplasmic vesicle membrane. The protein resides in the golgi apparatus membrane. Its subcellular location is the cytoplasm. The protein localises to the perinuclear region. The enzyme catalyses GTP + H2O = GDP + phosphate + H(+). Its function is as follows. Interferon (IFN)-inducible GTPase that plays important roles in innate immunity against a diverse range of bacterial, viral and protozoan pathogens. Hydrolyzes GTP to GMP in 2 consecutive cleavage reactions, but the major reaction product is GDP. Following infection, recruited to the pathogen-containing vacuoles or vacuole-escaped bacteria and acts as a positive regulator of inflammasome assembly by promoting the release of inflammasome ligands from bacteria. Acts by promoting lysis of pathogen-containing vacuoles, releasing pathogens into the cytosol. Following pathogen release in the cytosol, promotes recruitment of proteins that mediate bacterial cytolysis: this liberates ligands that are detected by inflammasomes, such as lipopolysaccharide (LPS) that activates the non-canonical CASP4/CASP11 inflammasome or double-stranded DNA (dsDNA) that activates the AIM2 inflammasome. Confers protection to the protozoan pathogen Toxoplasma gondii. Independently of its GTPase activity, acts as an inhibitor of various viruses infectivity, such as HIV-1, Zika and influenza A viruses, by inhibiting FURIN-mediated maturation of viral envelope proteins. The chain is Guanylate-binding protein 2 from Homo sapiens (Human).